We begin with the raw amino-acid sequence, 491 residues long: Probable diguanylate cyclase CdgI (491 aa).

The Cytoplasmic segment spans residues 1-54 (MIQSTRISMGLFFKYFLSLTKIDPGQNYISLPSIKSSTHIALLFMVSMGTQKLK). The chain crosses the membrane as a helical span at residues 55–75 (AQSFFIFSLLLTLILFCITTL). The Periplasmic segment spans residues 76-89 (YNENTNVKLIPQMN). The helical transmembrane segment at 90-110 (YLMVVVALFFLNAVIFLFMLM) threads the bilayer. Residues 111–121 (KYFTNKQILPT) are Cytoplasmic-facing. Residues 122 to 142 (LILSLAFLSGLIYLVETIVII) traverse the membrane as a helical segment. Residues 143-158 (HKPINGSTLIQTKSND) lie on the Periplasmic side of the membrane. A helical transmembrane segment spans residues 159–179 (VSIFYIFRQLSFICLTSLALF). At 180 to 193 (CYGKDNILDNNKKK) the chain is on the cytoplasmic side. Residues 194–214 (TGILLLALIPFLVFPLLAHNL) traverse the membrane as a helical segment. Residues 215–236 (SSYNADYSLYVVDYCPDNHTAT) lie on the Periplasmic side of the membrane. The chain crosses the membrane as a helical span at residues 237–257 (WGINYTKILVCLWAFLLFFII). Topologically, residues 258–265 (MRTRLASE) are cytoplasmic. A helical membrane pass occupies residues 266 to 286 (LWPLIALLCLASLCCNLLLLT). Topologically, residues 287–293 (LDEYNYT) are periplasmic. The chain crosses the membrane as a helical span at residues 294-314 (IWYISRGIEVSSKLFVVSFLI). Topologically, residues 315–491 (YNIFQELQLS…GGNKVIIHHI (177 aa)) are cytoplasmic. A GGDEF domain is found at 356-491 (KDFCVMLVDI…GGNKVIIHHI (136 aa)). Mg(2+)-binding residues include Asp364 and Ile365. Substrate-binding residues include Asn372, His377, and Asp381. Glu407 is a Mg(2+) binding site. Glu407 acts as the Proton acceptor in catalysis. Arg427 is a substrate binding site.

In terms of assembly, homodimer. The cofactor is Mg(2+).

It is found in the cell inner membrane. The enzyme catalyses 2 GTP = 3',3'-c-di-GMP + 2 diphosphate. It functions in the pathway purine metabolism; 3',5'-cyclic di-GMP biosynthesis. Catalyzes the synthesis of cyclic-di-GMP (c-di-GMP) via the condensation of 2 GTP molecules. The sequence is that of Probable diguanylate cyclase CdgI from Escherichia coli (strain K12).